The chain runs to 83 residues: Small ribosomal subunit protein uS17 (83 aa).

This sequence belongs to the universal ribosomal protein uS17 family. Part of the 30S ribosomal subunit.

Its function is as follows. One of the primary rRNA binding proteins, it binds specifically to the 5'-end of 16S ribosomal RNA. The chain is Small ribosomal subunit protein uS17 from Aliarcobacter butzleri (strain RM4018) (Arcobacter butzleri).